We begin with the raw amino-acid sequence, 295 residues long: CBY1-interacting BAR domain-containing protein 1 (295 aa).

The N-terminal 49 residues, 1-49, are a transit peptide targeting the mitochondrion; the sequence is MMSRTPDARARDTQTKQIQENITSVEKHFGDLCQLFAAYVRKTARLRDK. The BAR-like stretch occupies residues 12-222; the sequence is DTQTKQIQEN…NVDEEGDLEV (211 aa). A coiled-coil region spans residues 111–185; sequence KREDLKQTQS…KQKIRDIKKV (75 aa). Residues 243-265 are compositionally biased toward polar residues; that stretch reads SKLSLNRTGTSMSKSGTMQSRTS. A disordered region spans residues 243 to 295; sequence SKLSLNRTGTSMSKSGTMQSRTSSRQRKRDDEEDEEEDDEDEDDLEEVTDDEH. Residues 273-295 show a composition bias toward acidic residues; it reads DEEDEEEDDEDEDDLEEVTDDEH.

The protein belongs to the CIBAR family.

The protein localises to the cytoplasm. The protein resides in the cytoskeleton. Its subcellular location is the microtubule organizing center. It is found in the centrosome. It localises to the centriole. The protein localises to the cell projection. The protein resides in the cilium. Its subcellular location is the nucleus. It is found in the mitochondrion inner membrane. It localises to the flagellum. In terms of biological role, plays a critical role in regulating mitochondrial ultrastructure and function by maintaining the integrity of mitochondrial morphology, particularly the organization of cristae. Plays a crucial role in ciliogenesis. Plays a key role in the correct positioning of the annulus, a septin-based ring structure in the sperm flagellum, serving both as a physical barrier and a membrane diffusion barrier that separates the midpiece (MP) from the principal piece (PP). The protein is CBY1-interacting BAR domain-containing protein 1 (cibar1) of Danio rerio (Zebrafish).